Consider the following 242-residue polypeptide: Small ribosomal subunit protein uS2 (242 aa).

It belongs to the universal ribosomal protein uS2 family.

The sequence is that of Small ribosomal subunit protein uS2 from Vibrio vulnificus (strain CMCP6).